Here is a 305-residue protein sequence, read N- to C-terminus: UDP-N-acetylenolpyruvoylglucosamine reductase 2 (305 aa).

Positions 33-197 constitute an FAD-binding PCMH-type domain; the sequence is VGGKADVFVA…LEARFELEEG (165 aa). Residue Arg176 is part of the active site. Catalysis depends on Ser226, which acts as the Proton donor. The active site involves Glu296.

It belongs to the MurB family. It depends on FAD as a cofactor.

It is found in the cytoplasm. The enzyme catalyses UDP-N-acetyl-alpha-D-muramate + NADP(+) = UDP-N-acetyl-3-O-(1-carboxyvinyl)-alpha-D-glucosamine + NADPH + H(+). The protein operates within cell wall biogenesis; peptidoglycan biosynthesis. In terms of biological role, cell wall formation. The protein is UDP-N-acetylenolpyruvoylglucosamine reductase 2 of Bacillus cereus (strain ZK / E33L).